Here is a 177-residue protein sequence, read N- to C-terminus: Ribulose bisphosphate carboxylase small subunit, chloroplastic 4 (177 aa).

A chloroplast-targeting transit peptide spans 1 to 56 (MASSMMASTAAAVARAGPAQTNMVPFNACRSSVPFPATRKANNDLSTLPSNGGRVS).

It belongs to the RuBisCO small chain family. In terms of assembly, heterohexadecamer of 8 large and 8 small subunits.

It is found in the plastid. Its subcellular location is the chloroplast. Its function is as follows. RuBisCO catalyzes two reactions: the carboxylation of D-ribulose 1,5-bisphosphate, the primary event in carbon dioxide fixation, as well as the oxidative fragmentation of the pentose substrate. Both reactions occur simultaneously and in competition at the same active site. Although the small subunit is not catalytic it is essential for maximal activity. This chain is Ribulose bisphosphate carboxylase small subunit, chloroplastic 4, found in Lemna gibba (Swollen duckweed).